A 986-amino-acid polypeptide reads, in one-letter code: Probable serine/threonine-protein kinase DDB_G0272092 (986 aa).

The C2 domain maps to 1-107 (MARKIGSVRI…EYIVDTTKWY (107 aa)). Ca(2+) contacts are provided by aspartate 22, aspartate 28, aspartate 76, aspartate 78, serine 81, and aspartate 84. ANK repeat units lie at residues 137–167 (PEKS…DYTI), 171–201 (EGTP…RVSI), 205–238 (HGNT…GIND), 242–274 (LGET…IINH), 278–307 (TRDT…NVMI), and 312–344 (PSRT…WLNE). In terms of domain architecture, SAM spans 333–396 (EKVIEISDWL…LRAVRKIKDP (64 aa)). Residues 412 to 438 (HVENDNNNNNNNNNNNNNSQEQCNINN) show a composition bias toward low complexity. Disordered stretches follow at residues 412–520 (HVEN…SNTT) and 532–574 (TTLT…PEGP). A compositionally biased stretch (polar residues) spans 439–448 (DSLGSGNRNS). The segment covering 454-464 (QNQNNTLNNNN) has biased composition (low complexity). The span at 465-476 (VESKSTGNLNSL) shows a compositional bias: polar residues. Low complexity-rich tracts occupy residues 493–520 (NILS…SNTT) and 546–571 (TEST…TVTP). In terms of domain architecture, Protein kinase spans 601-870 (LTYNVLLGTG…ELLKIRDEYN (270 aa)). ATP contacts are provided by residues 607-615 (LGTGASGKV) and lysine 628. Aspartate 722 acts as the Proton acceptor in catalysis. 2 stretches are compositionally biased toward low complexity: residues 901 to 913 (DSNN…NNNN) and 928 to 947 (SNSN…SDNN). The disordered stretch occupies residues 901 to 986 (DSNNINNNNN…SPMEPKSIKK (86 aa)). 2 stretches are compositionally biased toward polar residues: residues 948–959 (ISEPATTDSITK) and 969–978 (LTRTRSSSSP).

It belongs to the protein kinase superfamily. TKL Ser/Thr protein kinase family. It depends on Ca(2+) as a cofactor.

The catalysed reaction is L-seryl-[protein] + ATP = O-phospho-L-seryl-[protein] + ADP + H(+). The enzyme catalyses L-threonyl-[protein] + ATP = O-phospho-L-threonyl-[protein] + ADP + H(+). The protein is Probable serine/threonine-protein kinase DDB_G0272092 of Dictyostelium discoideum (Social amoeba).